The chain runs to 690 residues: uncharacterized protein (690 aa).

This is an uncharacterized protein from Acanthamoeba polyphaga mimivirus (APMV).